We begin with the raw amino-acid sequence, 676 residues long: UvrABC system protein B (676 aa).

Positions R39–R424 constitute a Helicase ATP-binding domain. G52 to T59 provides a ligand contact to ATP. The short motif at Y105–I128 is the Beta-hairpin element. The Helicase C-terminal domain maps to Q441–I604. Positions K611–S631 are disordered. The 36-residue stretch at E629–Q664 folds into the UVR domain.

This sequence belongs to the UvrB family. Forms a heterotetramer with UvrA during the search for lesions. Interacts with UvrC in an incision complex.

Its subcellular location is the cytoplasm. Functionally, the UvrABC repair system catalyzes the recognition and processing of DNA lesions. A damage recognition complex composed of 2 UvrA and 2 UvrB subunits scans DNA for abnormalities. Upon binding of the UvrA(2)B(2) complex to a putative damaged site, the DNA wraps around one UvrB monomer. DNA wrap is dependent on ATP binding by UvrB and probably causes local melting of the DNA helix, facilitating insertion of UvrB beta-hairpin between the DNA strands. Then UvrB probes one DNA strand for the presence of a lesion. If a lesion is found the UvrA subunits dissociate and the UvrB-DNA preincision complex is formed. This complex is subsequently bound by UvrC and the second UvrB is released. If no lesion is found, the DNA wraps around the other UvrB subunit that will check the other stand for damage. This is UvrABC system protein B from Chlamydia muridarum (strain MoPn / Nigg).